Consider the following 174-residue polypeptide: Cytoglobin-1 (174 aa).

Positions Ser-15–Ala-165 constitute a Globin domain. Positions 78 and 110 each coordinate heme b.

This sequence belongs to the globin family. Monomeric. As to expression, expressed in all tissues examined with highest levels in brain, eye, gut and heart.

It localises to the cytoplasm. Its subcellular location is the nucleus. It carries out the reaction Fe(II)-heme b-[protein] + nitric oxide + O2 = Fe(III)-heme b-[protein] + nitrate. It catalyses the reaction Fe(III)-heme b-[protein] + nitric oxide + H2O = Fe(II)-heme b-[protein] + nitrite + 2 H(+). The enzyme catalyses 2 superoxide + 2 H(+) = H2O2 + O2. The catalysed reaction is H2O2 + AH2 = A + 2 H2O. Probable multifunctional globin with a hexacoordinated heme iron required for the catalysis of various reactions depending on redox condition of the cell as well as oxygen availability. Has a nitric oxide dioxygenase (NOD) activity and is most probably involved in cell-mediated and oxygen-dependent nitric oxide consumption. Under normoxic conditions functions as a nitric oxide dioxygenase (NOD) but under hypoxic conditions the globin may switch its function to that of a nitrite (NO2) reductase (NiR), generating nitric oxide. Could also have peroxidase and superoxide dismutase activities, detoxifying reactive oxygen species and protecting cells against oxidative stress. Also binds dioxygen with low affinity and could function as an oxygen sensor but has probably no function as a respiratory oxygen carrier. The polypeptide is Cytoglobin-1 (cygb1) (Danio rerio (Zebrafish)).